The primary structure comprises 141 residues: Ly6/PLAUR domain-containing protein 1 (141 aa).

An N-terminal signal peptide occupies residues 1-20; it reads MWVLGIAATFCGLFWLPGLA. 6 cysteine pairs are disulfide-bonded: cysteine 25–cysteine 54, cysteine 28–cysteine 37, cysteine 46–cysteine 71, cysteine 77–cysteine 100, cysteine 88–cysteine 97, and cysteine 101–cysteine 106. Positions 25–107 constitute a UPAR/Ly6 domain; sequence CYQCEEFQLN…ISCCNTPLCN (83 aa). The N-linked (GlcNAc...) asparagine glycan is linked to asparagine 45. Residue glycine 115 is the site of GPI-anchor amidated glycine attachment. The propeptide at 116 to 141 is removed in mature form; sequence SSASAIRPGLLTTLLFFHLALCLAHC.

Interacts with CHRNA4 and nAChRs containing alpha-4:beta-2 (CHRNA4:CHRNB2) and alpha-7 (CHRNA7) subunits. Preferentially expressed in the nervous system. Expressed in embryonic and postnatal postmitotic central and peripheral neurons including subpopulations of motor neurons, sensory neurons, interneurons and neurons of the autonomous nervous system. Expressed around the growing nerves in the limb bud. Expressed at high levels in specific brain regions such as the prefrontal cortex, amygdala, hippocampus, mediodorsal thalamus, dentate gyrus and specific brainstem nuclei (at protein level).

It localises to the cell membrane. In terms of biological role, believed to act as a modulator of nicotinic acetylcholine receptors (nAChRs) activity. In vitro increases receptor desensitization and decreases affinity for ACh of alpha-4:beta-2-containing nAChRs. May play a role in the intracellular trafficking of alpha-4:beta-2 and alpha-7-containing nAChRs and may inhibit their expression at the cell surface. May be involved in the control of anxiety. In Mus musculus (Mouse), this protein is Ly6/PLAUR domain-containing protein 1 (Lypd1).